The primary structure comprises 185 residues: Photosystem I assembly protein Ycf4 (185 aa).

The next 2 helical transmembrane spans lie at asparagine 21–tyrosine 43 and glycine 63–leucine 85.

Belongs to the Ycf4 family.

The protein localises to the plastid. It localises to the chloroplast thylakoid membrane. Seems to be required for the assembly of the photosystem I complex. This is Photosystem I assembly protein Ycf4 from Aegilops crassa (Persian goatgrass).